A 555-amino-acid polypeptide reads, in one-letter code: Disabled homolog 1 (555 aa).

The tract at residues Met1–Arg26 is disordered. The span at Ala15–Arg26 shows a compositional bias: basic and acidic residues. The 154-residue stretch at Lys36–Leu189 folds into the PID domain. Tyr198, Tyr220, and Tyr232 each carry phosphotyrosine. 3 disordered regions span residues Leu384–Met410, Phe418–Thr437, and Asn468–Ser555. Residues Pro391–Thr403 are compositionally biased toward polar residues. 2 stretches are compositionally biased toward low complexity: residues Thr470 to Thr479 and Pro487 to Ser501. Phosphoserine; by CDK5 is present on Ser491. Acidic residues predominate over residues Thr504–Phe513.

Associates with the SH2 domains of SRC, FYN and ABL. Interacts (phosphorylated on tyrosine residues) with CRK and CRKL (via respective SH2 domain). Interacts with DAB2IP, SIAH1, LRP8 and VLDLR. Interacts with LRP1. Interacts with APLP1 (via NPXY motif). Interacts with DAB2IP. Interacts with ZSWIM8. In terms of processing, phosphorylated by FYN on Tyr-198 and Tyr-220 upon reelin induction in embryonic neurons. Also phosphorylated on Ser-491 independently of reelin signaling. Post-translationally, ubiquitinated by various cullin-5-RING E3 ubiquitin-protein ligase complexes (ECS complexes) following ligand-binding and phosphorylation, leading to its degradation. Ubiquitinated by the ECS(SOCS7) complex in the cortical plate of the developing cerebral cortex following ligand-binding and phosphorylation by FYN, leading to its degradation by the proteasome. Recognized by ZSWIM8 through a disorder targets misorder mechanism that eliminates misfolded DAB1 via ubiquitination and proteasomal degradation.

The protein resides in the cytoplasm. Signaling adapter of the reelin-mediated signaling pathway, which regulates the migration and differentiation of postmitotic neurons during brain development. Mediates intracellular transduction of Reelin signaling following reelin (RELN)-binding to its receptor: acts by docking proteins through its phosphotyrosine residues and PID domain. The chain is Disabled homolog 1 (DAB1) from Macaca fascicularis (Crab-eating macaque).